A 261-amino-acid chain; its full sequence is Cytochrome c oxidase subunit 3 (261 aa).

The Mitochondrial matrix portion of the chain corresponds to 1 to 15 (MTHQTHAYHMVNPSP). Residues 16 to 34 (WPLTGALSALLMTSGLAMW) traverse the membrane as a helical segment. Over 35-40 (FHFNST) the chain is Mitochondrial intermembrane. A helical transmembrane segment spans residues 41 to 66 (ILLMIGLTTNTLTMYQWWRDVIREST). Residues 67-72 (FQGHHT) lie on the Mitochondrial matrix side of the membrane. Residues 73 to 105 (PTVQKGLRYGMILFIISEVLFFTGFFWAFYHSS) form a helical membrane-spanning segment. The Mitochondrial intermembrane segment spans residues 106–128 (LAPTPELGGCWPPTGIHPLNPLE). Residues 129–152 (VPLLNTSVLLASGVSITWAHHSLM) form a helical membrane-spanning segment. The Mitochondrial matrix segment spans residues 153-155 (EGN). The helical transmembrane segment at 156–183 (RYPMLQALFITIALGVYFTLLQASEYYE) threads the bilayer. Residues 184 to 190 (APFTISD) are Mitochondrial intermembrane-facing. The chain crosses the membrane as a helical span at residues 191–223 (GVYGSTFFVATGFHGLHVIIGSTFLIVCFFRQL). The Mitochondrial matrix segment spans residues 224–232 (KFHFTSNHH). The helical transmembrane segment at 233 to 256 (FGFEAAAWYWHFVDVVWLFLYVSI) threads the bilayer. The Mitochondrial intermembrane segment spans residues 257–261 (YWWGS).

It belongs to the cytochrome c oxidase subunit 3 family. As to quaternary structure, component of the cytochrome c oxidase (complex IV, CIV), a multisubunit enzyme composed of 14 subunits. The complex is composed of a catalytic core of 3 subunits MT-CO1, MT-CO2 and MT-CO3, encoded in the mitochondrial DNA, and 11 supernumerary subunits COX4I, COX5A, COX5B, COX6A, COX6B, COX6C, COX7A, COX7B, COX7C, COX8 and NDUFA4, which are encoded in the nuclear genome. The complex exists as a monomer or a dimer and forms supercomplexes (SCs) in the inner mitochondrial membrane with NADH-ubiquinone oxidoreductase (complex I, CI) and ubiquinol-cytochrome c oxidoreductase (cytochrome b-c1 complex, complex III, CIII), resulting in different assemblies (supercomplex SCI(1)III(2)IV(1) and megacomplex MCI(2)III(2)IV(2)).

The protein resides in the mitochondrion inner membrane. It catalyses the reaction 4 Fe(II)-[cytochrome c] + O2 + 8 H(+)(in) = 4 Fe(III)-[cytochrome c] + 2 H2O + 4 H(+)(out). In terms of biological role, component of the cytochrome c oxidase, the last enzyme in the mitochondrial electron transport chain which drives oxidative phosphorylation. The respiratory chain contains 3 multisubunit complexes succinate dehydrogenase (complex II, CII), ubiquinol-cytochrome c oxidoreductase (cytochrome b-c1 complex, complex III, CIII) and cytochrome c oxidase (complex IV, CIV), that cooperate to transfer electrons derived from NADH and succinate to molecular oxygen, creating an electrochemical gradient over the inner membrane that drives transmembrane transport and the ATP synthase. Cytochrome c oxidase is the component of the respiratory chain that catalyzes the reduction of oxygen to water. Electrons originating from reduced cytochrome c in the intermembrane space (IMS) are transferred via the dinuclear copper A center (CU(A)) of subunit 2 and heme A of subunit 1 to the active site in subunit 1, a binuclear center (BNC) formed by heme A3 and copper B (CU(B)). The BNC reduces molecular oxygen to 2 water molecules using 4 electrons from cytochrome c in the IMS and 4 protons from the mitochondrial matrix. This chain is Cytochrome c oxidase subunit 3 (MT-CO3), found in Raphicerus campestris (Steenbok).